The following is a 389-amino-acid chain: Phospho-N-acetylmuramoyl-pentapeptide-transferase (389 aa).

11 helical membrane-spanning segments follow: residues 25–45 (RAVMANVTALVIGLGFGPWVI), 74–94 (MGGVLVLISIAISTLLWCDWG), 97–117 (FIWVVLLVTLGYGAIGWVDDY), 134–154 (FFWQTLIGLVAAVYLAFSVSE), 167–187 (WIEGGMFADVPYKMNLIVPFF), 190–210 (VSYPLGVTGFIVLTYLVIVGS), 222–242 (GLVIMPVVLVGGGLGVFAYVM), 259–279 (AGELLIFCSAMAGAGLAFLWF), 286–306 (VFMGDVGALALGGALGTVAVI), 311–331 (IVLFVMGGIFVVETLSVMLQV), and 366–386 (QVTVRFWIITMLLVLIGLSSL).

It belongs to the glycosyltransferase 4 family. MraY subfamily. The cofactor is Mg(2+).

The protein localises to the cell inner membrane. It carries out the reaction UDP-N-acetyl-alpha-D-muramoyl-L-alanyl-gamma-D-glutamyl-meso-2,6-diaminopimeloyl-D-alanyl-D-alanine + di-trans,octa-cis-undecaprenyl phosphate = di-trans,octa-cis-undecaprenyl diphospho-N-acetyl-alpha-D-muramoyl-L-alanyl-D-glutamyl-meso-2,6-diaminopimeloyl-D-alanyl-D-alanine + UMP. It participates in cell wall biogenesis; peptidoglycan biosynthesis. Functionally, catalyzes the initial step of the lipid cycle reactions in the biosynthesis of the cell wall peptidoglycan: transfers peptidoglycan precursor phospho-MurNAc-pentapeptide from UDP-MurNAc-pentapeptide onto the lipid carrier undecaprenyl phosphate, yielding undecaprenyl-pyrophosphoryl-MurNAc-pentapeptide, known as lipid I. This chain is Phospho-N-acetylmuramoyl-pentapeptide-transferase, found in Cupriavidus metallidurans (strain ATCC 43123 / DSM 2839 / NBRC 102507 / CH34) (Ralstonia metallidurans).